A 433-amino-acid polypeptide reads, in one-letter code: Protein translocase subunit SecD (433 aa).

The next 6 membrane-spanning stretches (helical) occupy residues 7–27 (LAFL…GPKI), 257–277 (LIAG…AYRM), 278–298 (AGLI…LTFA), 300–320 (LHVV…GIAV), 354–374 (TIVD…IFGG), and 380–400 (GFAV…VLFA).

Belongs to the SecD/SecF family. SecD subfamily. In terms of assembly, forms a complex with SecF. Part of the essential Sec protein translocation apparatus which comprises SecA, SecYEG and auxiliary proteins SecDF. Other proteins may also be involved.

Its subcellular location is the cell membrane. Functionally, part of the Sec protein translocase complex. Interacts with the SecYEG preprotein conducting channel. SecDF uses the proton motive force (PMF) to complete protein translocation after the ATP-dependent function of SecA. The protein is Protein translocase subunit SecD of Alicyclobacillus acidocaldarius subsp. acidocaldarius (strain ATCC 27009 / DSM 446 / BCRC 14685 / JCM 5260 / KCTC 1825 / NBRC 15652 / NCIMB 11725 / NRRL B-14509 / 104-IA) (Bacillus acidocaldarius).